Consider the following 635-residue polypeptide: 3-dehydroshikimate dehydratase (635 aa).

Positions 134, 165, 191, and 239 each coordinate a divalent metal cation. VOC domains follow at residues 295-414 (GVEF…LVEQ) and 440-590 (RIDH…VYTE). 3 residues coordinate Mg(2+): His443, His521, and Glu599.

Belongs to the bacterial two-domain DSD family. As to quaternary structure, homodimer. Requires Co(2+) as cofactor. The cofactor is Ni(2+). Mg(2+) is required as a cofactor. Mn(2+) serves as cofactor.

The enzyme catalyses 3-dehydroshikimate = 3,4-dihydroxybenzoate + H2O. The protein operates within aromatic compound metabolism; 3,4-dihydroxybenzoate biosynthesis. Its function is as follows. Catalyzes the conversion of 3-dehydroshikimate to protocatechuate (3,4-dihydroxybenzoate), a common intermediate of quinate and shikimate degradation pathways. The protein is 3-dehydroshikimate dehydratase of Pseudomonas putida (strain ATCC 47054 / DSM 6125 / CFBP 8728 / NCIMB 11950 / KT2440).